We begin with the raw amino-acid sequence, 122 residues long: Ribosome-binding factor A (122 aa).

Basic and acidic residues predominate over residues 95 to 111 (PTVERVTRIQRTLREVS). Residues 95 to 122 (PTVERVTRIQRTLREVSGEDGDGNGTQE) form a disordered region.

Belongs to the RbfA family. In terms of assembly, monomer. Binds 30S ribosomal subunits, but not 50S ribosomal subunits or 70S ribosomes.

Its subcellular location is the cytoplasm. In terms of biological role, one of several proteins that assist in the late maturation steps of the functional core of the 30S ribosomal subunit. Associates with free 30S ribosomal subunits (but not with 30S subunits that are part of 70S ribosomes or polysomes). Required for efficient processing of 16S rRNA. May interact with the 5'-terminal helix region of 16S rRNA. The polypeptide is Ribosome-binding factor A (Rubrobacter xylanophilus (strain DSM 9941 / JCM 11954 / NBRC 16129 / PRD-1)).